Consider the following 33-residue polypeptide: Cytochrome b6-f complex subunit 6 (33 aa).

The helical transmembrane segment at 4–24 (ITIISYFGLLLASIIFTLVLF) threads the bilayer.

Belongs to the PetL family. In terms of assembly, the 4 large subunits of the cytochrome b6-f complex are cytochrome b6, subunit IV (17 kDa polypeptide, PetD), cytochrome f and the Rieske protein, while the 4 small subunits are PetG, PetL, PetM and PetN. The complex functions as a dimer.

It localises to the plastid. The protein localises to the chloroplast thylakoid membrane. Its function is as follows. Component of the cytochrome b6-f complex, which mediates electron transfer between photosystem II (PSII) and photosystem I (PSI), cyclic electron flow around PSI, and state transitions. PetL is important for photoautotrophic growth as well as for electron transfer efficiency and stability of the cytochrome b6-f complex. The chain is Cytochrome b6-f complex subunit 6 from Pinus mugo (Dwarf mountain pine).